Consider the following 1453-residue polypeptide: Collagen alpha-1(I) chain (1453 aa).

An N-terminal signal peptide occupies residues 1–22 (MFSFVDLRLLLLLGATALLTHG). A propeptide spans 23-151 (QEDIPEVSCI…PPGLGGNFAS (129 aa)) (N-terminal propeptide). The VWFC domain occupies 29–87 (VSCIHNGLRVPNGETWKPEVCLICICHNGTAVCDDVQCNEELDCPNPQRREGECCAFCP). Asn-56 is a glycosylation site (N-linked (GlcNAc...) asparagine). The disordered stretch occupies residues 94–1210 (NSEDVGVEGP…GGRYYRADDA (1117 aa)). Composition is skewed to pro residues over residues 109–118 (PQGPRGPVGP) and 128–143 (PGLP…PGPP). A nonhelical region (N-terminal) region spans residues 152–167 (QMSYGYDEKSAGVSVP). Residue Lys-160 is modified to Allysine. Residue Ser-161 is modified to Phosphoserine. Positions 168–1181 (GPMGPSGPRG…PGPPGPPGPP (1014 aa)) are triple-helical region. 11 positions are modified to 4-hydroxyproline: Pro-179, Pro-182, Pro-185, Pro-194, Pro-197, Pro-200, Pro-215, Pro-230, Pro-236, Pro-245, and Pro-251. The span at 198–207 (GEPGGSGPMG) shows a compositional bias: gly residues. Basic and acidic residues predominate over residues 218–232 (NGDDGEAGKPGRPGE). 5-hydroxylysine; alternate is present on Lys-254. Lys-254 carries an O-linked (Gal...) hydroxylysine; alternate glycan. Residue Ser-260 is modified to Phosphoserine. Over residues 268 to 284 (DAGPAGPKGEPGSPGEN) the composition is skewed to low complexity. Residues Pro-278, Pro-281, Pro-287, Pro-296, and Pro-302 each carry the 4-hydroxyproline modification. The span at 307-320 (TAGARGNDGAVGAA) shows a compositional bias: low complexity. A compositionally biased stretch (pro residues) spans 322–334 (PPGPTGPTGPPGF). 4-hydroxyproline is present on residues Pro-323, Pro-332, Pro-335, Pro-362, Pro-365, Pro-377, Pro-383, Pro-392, Pro-398, Pro-401, and Pro-416. The segment covering 368-407 (AGAAGPAGNPGADGQPGAKGANGAPGIAGAPGFPGARGPS) has biased composition (low complexity). The residue at position 419 (Lys-419) is a 5-hydroxylysine. Pro-425, Pro-428, Pro-440, Pro-449, Pro-464, Pro-470, Pro-479, and Pro-485 each carry 4-hydroxyproline. Over residues 474-483 (GERGGPGSRG) the composition is skewed to gly residues. The residue at position 494 (Lys-494) is a 5-hydroxylysine. Residues 499–515 (ERGAPGPAGPKGSPGEA) are compositionally biased toward low complexity. Pro-503, Pro-512, Pro-518, Pro-524, Pro-533, Pro-536, Pro-545, Pro-554, Pro-560, Pro-572, Pro-581, Pro-590, Pro-593, Pro-611, Pro-629, Pro-635, Pro-641, Pro-647, Pro-653, Pro-659, Pro-671, Pro-680, Pro-692, Pro-704, Pro-707, Pro-713, Pro-719, and Pro-728 each carry 4-hydroxyproline. Residues 527–566 (KGLTGSPGSPGPDGKTGPPGPAGQDGRPGPAGPPGARGQA) are compositionally biased toward low complexity. Over residues 623 to 650 (QGPAGSPGFQGLPGPAGPPGEAGKPGEQ) the composition is skewed to low complexity. Composition is skewed to low complexity over residues 685–695 (PRGNNGAPGND) and 703–716 (APGA…PGLQ). A Cell attachment site motif is present at residues 734–736 (RGD). Residue Lys-740 is modified to 5-hydroxylysine. 4-hydroxyproline is present on residues Pro-746, Pro-761, and Pro-767. The residue at position 776 (Ser-776) is a Phosphoserine. 4-hydroxyproline occurs at positions 788, 797, 806, 812, 830, 839, and 848. The span at 800-815 (AGFAGPPGADGQPGAK) shows a compositional bias: low complexity. Pro residues predominate over residues 829–841 (PPGPAGPAGPPGP). Residues 842–872 (IGNVGAPGPKGPRGAAGPPGATGFPGAAGRV) show a composition bias toward low complexity. Lys-851 carries the 5-hydroxylysine modification. 2 positions are modified to 4-hydroxyproline: Pro-860 and Pro-866. Position 874 is a 3-hydroxyproline (Pro-874). A 4-hydroxyproline mark is found at Pro-875, Pro-884, Pro-887, Pro-908, Pro-917, Pro-926, Pro-935, Pro-953, Pro-962, Pro-965, Pro-971, Pro-986, Pro-992, Pro-998, Pro-1007, and Pro-1013. The segment covering 901 to 910 (ETGPAGRPGE) has biased composition (low complexity). The segment covering 920–935 (AGEKGSPGADGPAGSP) has biased composition (low complexity). Residues 985–995 (PPGPMGPPGLA) show a composition bias toward pro residues. Residues 997-1012 (PPGESGREGSPGAEGS) are compositionally biased toward low complexity. Lys-1022 is modified (5-hydroxylysine). Residues 1031–1046 (AGPPGAPGAPGAPGPV) are compositionally biased toward pro residues. Pro-1034, Pro-1037, and Pro-1040 each carry 4-hydroxyproline. Over residues 1067–1081 (IGPAGARGPAGPQGP) the composition is skewed to low complexity. The Cell attachment site signature appears at 1082–1084 (RGD). Basic and acidic residues predominate over residues 1082–1096 (RGDKGETGEQGDRGI). A 5-hydroxylysine modification is found at Lys-1085. At Lys-1097 the chain carries 5-hydroxylysine; alternate. An O-linked (Gal...) hydroxylysine; alternate glycan is attached at Lys-1097. The span at 1102–1148 (FSGLQGPPGSPGSPGEQGPSGASGPAGPRGPPGSAGSPGKDGLNGLP) shows a compositional bias: low complexity. Pro-1109, Pro-1112, Pro-1115, Pro-1133, and Pro-1148 each carry 4-hydroxyproline. 3-hydroxyproline is present on Pro-1153. The residue at position 1154 (Pro-1154) is a 4-hydroxyproline. A compositionally biased stretch (pro residues) spans 1166 to 1181 (AGPPGPPGPPGPPGPP). Pro-1168 bears the 3-hydroxyproline mark. Residue Pro-1169 is modified to 4-hydroxyproline. The residue at position 1171 (Pro-1171) is a 3-hydroxyproline. Position 1172 is a 4-hydroxyproline (Pro-1172). Residue Pro-1174 is modified to 3-hydroxyproline. Pro-1175, Pro-1178, and Pro-1181 each carry 4-hydroxyproline. Positions 1182 to 1207 (SGGYDFSFLPQPPQEKSQDGGRYYRA) are nonhelical region (C-terminal). At Lys-1197 the chain carries Allysine. Over residues 1197 to 1210 (KSQDGGRYYRADDA) the composition is skewed to basic and acidic residues. Residues 1208–1453 (DDANVVRDRD…GLDIGPACFV (246 aa)) constitute a propeptide, C-terminal propeptide. The region spanning 1218 to 1453 (LEVDTTLKSL…GLDIGPACFV (236 aa)) is the Fibrillar collagen NC1 domain. Intrachain disulfides connect Cys-1248-Cys-1280, Cys-1288-Cys-1451, and Cys-1359-Cys-1404. Ca(2+) contacts are provided by Asp-1266, Asn-1268, Gln-1269, Cys-1271, and Asp-1274. N-linked (GlcNAc...) asparagine glycosylation occurs at Asn-1354.

The protein belongs to the fibrillar collagen family. In terms of assembly, trimers of one alpha 2(I) and two alpha 1(I) chains. Interacts with MRC2. Interacts with TRAM2. Interacts with MFAP4 in a Ca (2+)-dependent manner. Post-translationally, contains mostly 4-hydroxyproline. Proline residues at the third position of the tripeptide repeating unit (G-X-Y) are hydroxylated in some or all of the chains. In terms of processing, contains 3-hydroxyproline at a few sites. This modification occurs on the first proline residue in the sequence motif Gly-Pro-Hyp, where Hyp is 4-hydroxyproline. Lysine residues at the third position of the tripeptide repeating unit (G-X-Y) are 5-hydroxylated in some or all of the chains. Post-translationally, O-glycosylated on hydroxylated lysine residues. The O-linked glycan consists of a Glc-Gal disaccharide. As to expression, forms the fibrils of tendon, ligaments and bones. In bones the fibrils are mineralized with calcium hydroxyapatite.

The protein localises to the secreted. The protein resides in the extracellular space. It localises to the extracellular matrix. In terms of biological role, type I collagen is a member of group I collagen (fibrillar forming collagen). This is Collagen alpha-1(I) chain from Mus musculus (Mouse).